The chain runs to 186 residues: MKYLVAGLGNVGQKYENSRHNIGFMILDALAKASSVVFTDKCYGAIASLKLKNKCLFLLKPSTYMNLSGNAIRYWLQKENIYSENLLILVDDLSLPFGSLRLKTKGSDGGHNGLKNIQYTLRTKYYNRLRFGIGNNFPSGCQINYVLDNFTKEEKKHLSERIEKAIEIVYSFCLSGSEITMNLFNK.

Tyr15 lines the tRNA pocket. The active-site Proton acceptor is the His20. TRNA contacts are provided by Tyr64, Asn66, and Asn112.

The protein belongs to the PTH family. In terms of assembly, monomer.

The protein localises to the cytoplasm. The catalysed reaction is an N-acyl-L-alpha-aminoacyl-tRNA + H2O = an N-acyl-L-amino acid + a tRNA + H(+). In terms of biological role, hydrolyzes ribosome-free peptidyl-tRNAs (with 1 or more amino acids incorporated), which drop off the ribosome during protein synthesis, or as a result of ribosome stalling. Functionally, catalyzes the release of premature peptidyl moieties from peptidyl-tRNA molecules trapped in stalled 50S ribosomal subunits, and thus maintains levels of free tRNAs and 50S ribosomes. This is Peptidyl-tRNA hydrolase from Azobacteroides pseudotrichonymphae genomovar. CFP2.